The primary structure comprises 359 residues: S-adenosylmethionine:tRNA ribosyltransferase-isomerase (359 aa).

It belongs to the QueA family. Monomer.

It localises to the cytoplasm. The catalysed reaction is 7-aminomethyl-7-carbaguanosine(34) in tRNA + S-adenosyl-L-methionine = epoxyqueuosine(34) in tRNA + adenine + L-methionine + 2 H(+). Its pathway is tRNA modification; tRNA-queuosine biosynthesis. Its function is as follows. Transfers and isomerizes the ribose moiety from AdoMet to the 7-aminomethyl group of 7-deazaguanine (preQ1-tRNA) to give epoxyqueuosine (oQ-tRNA). This is S-adenosylmethionine:tRNA ribosyltransferase-isomerase from Synechococcus sp. (strain ATCC 27144 / PCC 6301 / SAUG 1402/1) (Anacystis nidulans).